The following is a 1115-amino-acid chain: Gamma tubulin complex adapter mto1 (1115 aa).

Residues Leu-25 to Leu-180 are disordered. Basic and acidic residues-rich tracts occupy residues Glu-28–Ser-41 and Glu-56–Lys-71. Composition is skewed to polar residues over residues Ser-72–Leu-102, Asp-119–Ile-130, and Pro-139–Glu-151. The residue at position 94 (Ser-94) is a Phosphoserine. Positions Ser-165 to Ser-176 are enriched in low complexity. The stretch at Asn-445–Val-915 forms a coiled coil. Positions Leu-523 to Leu-537 are required for interaction with mto2. Over residues Gly-1001 to Arg-1011 the composition is skewed to polar residues. Disordered stretches follow at residues Gly-1001–Arg-1037 and Glu-1067–Lys-1115. A phosphoserine mark is found at Ser-1005 and Ser-1009. Composition is skewed to basic and acidic residues over residues Val-1016 to Leu-1025 and Glu-1067 to Asp-1084. The stretch at Lys-1072–Ser-1102 forms a coiled coil. 2 stretches are compositionally biased toward polar residues: residues Ile-1086–Gln-1095 and Ser-1104–Lys-1115.

As to quaternary structure, interacts with mto2; the interaction is direct and required for efficient binding to the gamma-tubulin complex. Interacts with gamma tubulin complex subunits alp4, alp6 and gtb1. Interacts with mcp6.

Its subcellular location is the cytoplasm. The protein localises to the cytoskeleton. It is found in the microtubule organizing center. It localises to the spindle pole body. In terms of biological role, spindle pole body (SPB) component that acts as the gamma-tubulin complex-binding protein of the SPB outer plaque. Promotes nucleation of all cytoplasmic microtubules by recruiting the gamma-tubulin complex to the spindle pole body (SPB), to the interphase microtubule organizing center (iMTOC), and to the equatorial MTOC (eMTOC) during anaphase. In Schizosaccharomyces pombe (strain 972 / ATCC 24843) (Fission yeast), this protein is Gamma tubulin complex adapter mto1.